A 184-amino-acid chain; its full sequence is GTP-binding protein Rheb (184 aa).

Lys-8 is covalently cross-linked (Glycyl lysine isopeptide (Lys-Gly) (interchain with G-Cter in ubiquitin)). Residues Ser-16, Val-17, Gly-18, Lys-19, Ser-20, Ser-21, Val-32, and Asp-33 each coordinate GDP. GTP contacts are provided by Ser-16, Val-17, Gly-18, Lys-19, Ser-20, Ser-21, Val-32, Asp-33, Tyr-35, Pro-37, Thr-38, Gly-63, Asn-119, Lys-120, and Asp-122. Position 20 (Ser-20) interacts with Mg(2+). The short motif at 35–43 (YDPTIENTF) is the Effector region element. Thr-38 lines the Mg(2+) pocket. Residue Asn-119 coordinates GDP. GDP is bound at residue Asp-122. Residue Ser-130 is modified to Phosphoserine; by MAPKAPK5. Residue Ala-150 coordinates GDP. Residue Ala-150 participates in GTP binding. The residue at position 181 (Cys-181) is a Cysteine methyl ester. Cys-181 carries the S-farnesyl cysteine lipid modification. The propeptide at 182-184 (SVM) is removed in mature form.

It belongs to the small GTPase superfamily. Rheb family. In terms of assembly, associates with the mTORC1 complex (MTOR, MLST8 and RPTOR) in a guanyl nucleotide-independent manner. Interacts with TSC2. Interacts with MCRS1; the interaction maintains RHEB at the lysosome in its active GTP-bound form and prevents its interaction with the mTORC1 complex inhibitor TSC2, ensuring activation of the mTORC1 complex by RHEB. Interacts (when prenylated) with PDE6D; this promotes release from membranes. Farnesylation is important for efficiently activating mTORC1-mediated signaling. In terms of processing, polyubiquitinated in response to amino acid, promoting its interaction with MTOR and mTORC1 activation. Deubiquitination by ATXN3 promotes recruitment of the TSC-TBC complex and RHEB inactivation by TSC2. Monoubiquitinated at Lys-8 by RNF152, promoting its association with the TSC-TBC complex. Deubiquitinated at Lys-8 by USP4, promoting mTORC1 activation. Post-translationally, phosphorylation by MAPKAPK5 impairs GTP-binding and inactivation.

It is found in the endomembrane system. It localises to the lysosome membrane. The protein resides in the golgi apparatus membrane. The protein localises to the endoplasmic reticulum membrane. Its subcellular location is the cytoplasm. It is found in the cytosol. The catalysed reaction is GTP + H2O = GDP + phosphate + H(+). Its activity is regulated as follows. Alternates between an inactive form bound to GDP and an active form bound to GTP. Inactivated by the TSC-TBC complex via the GTPase activating protein (GAP) domain of TSC2. Autoinhibited by Tyr-35, which constrains the active site conformation, restricting the access of the catalytic Asp-65 to the nucleotide-binding pocket. In terms of biological role, small GTPase that acts as an allosteric activator of the canonical mTORC1 complex, an evolutionarily conserved central nutrient sensor that stimulates anabolic reactions and macromolecule biosynthesis to promote cellular biomass generation and growth. In response to nutrients, growth factors or amino acids, specifically activates the protein kinase activity of MTOR, the catalytic component of the mTORC1 complex: acts by causing a conformational change that allows the alignment of residues in the active site of MTOR, thereby enhancing the phosphorylation of ribosomal protein S6 kinase (RPS6KB1 and RPS6KB2) and EIF4EBP1 (4E-BP1). RHEB is also required for localization of the TSC-TBC complex to lysosomal membranes. In response to starvation, RHEB is inactivated by the TSC-TBC complex, preventing activation of mTORC1. Has low intrinsic GTPase activity. This chain is GTP-binding protein Rheb, found in Mus musculus (Mouse).